Reading from the N-terminus, the 253-residue chain is Chromosome-partitioning ATPase Soj (253 aa).

Positions 11, 12, 13, 14, 15, 16, 17, 18, 211, and 213 each coordinate ATP. T17 is a binding site for Mg(2+).

The protein belongs to the ParA family.

The catalysed reaction is ATP + H2O = ADP + phosphate + H(+). Its function is as follows. ATPase probably involved in chromosome partitioning. Cooperatively binds dsDNA, forming nucleoprotein filaments in a strictly ATP-dependent fashion. The chain is Chromosome-partitioning ATPase Soj from Treponema pallidum (strain Nichols).